We begin with the raw amino-acid sequence, 189 residues long: GTP cyclohydrolase 1 (189 aa).

Zn(2+)-binding residues include Cys-78, His-81, and Cys-150.

It belongs to the GTP cyclohydrolase I family. In terms of assembly, toroid-shaped homodecamer, composed of two pentamers of five dimers.

The catalysed reaction is GTP + H2O = 7,8-dihydroneopterin 3'-triphosphate + formate + H(+). It participates in cofactor biosynthesis; 7,8-dihydroneopterin triphosphate biosynthesis; 7,8-dihydroneopterin triphosphate from GTP: step 1/1. The protein is GTP cyclohydrolase 1 of Bacillus pumilus (strain SAFR-032).